A 152-amino-acid polypeptide reads, in one-letter code: uncharacterized protein (152 aa).

It belongs to the transposase 8 family.

This is an uncharacterized protein from Sinorhizobium fredii (strain NBRC 101917 / NGR234).